The sequence spans 599 residues: NADH-quinone oxidoreductase subunit C/D (599 aa).

Polar residues predominate over residues 1-15 (MTDLTAQELAQPSWQ). The segment at 1–21 (MTDLTAQELAQPSWQTRDHQD) is disordered. Residues 1–189 (MTDLTAQELA…DPFELTKQKE (189 aa)) are NADH dehydrogenase I subunit C. An NADH dehydrogenase I subunit D region spans residues 213 to 599 (DFMFLNLGPN…IDFVMSDVDR (387 aa)).

The protein in the N-terminal section; belongs to the complex I 30 kDa subunit family. This sequence in the C-terminal section; belongs to the complex I 49 kDa subunit family. As to quaternary structure, NDH-1 is composed of 13 different subunits. Subunits NuoB, CD, E, F, and G constitute the peripheral sector of the complex.

It is found in the cell inner membrane. It carries out the reaction a quinone + NADH + 5 H(+)(in) = a quinol + NAD(+) + 4 H(+)(out). In terms of biological role, NDH-1 shuttles electrons from NADH, via FMN and iron-sulfur (Fe-S) centers, to quinones in the respiratory chain. The immediate electron acceptor for the enzyme in this species is believed to be ubiquinone. Couples the redox reaction to proton translocation (for every two electrons transferred, four hydrogen ions are translocated across the cytoplasmic membrane), and thus conserves the redox energy in a proton gradient. The chain is NADH-quinone oxidoreductase subunit C/D from Erwinia tasmaniensis (strain DSM 17950 / CFBP 7177 / CIP 109463 / NCPPB 4357 / Et1/99).